The following is a 447-amino-acid chain: Tektin-4 (447 aa).

Coiled-coil stretches lie at residues 69 to 144 (ADRD…ALDA) and 304 to 423 (FGRR…TNSL). Residues 72–81 (DQSERQRHES) show a composition bias toward basic and acidic residues. The tract at residues 72–104 (DQSERQRHESQQLAAETEALAQRTQQDSTRKVG) is disordered. Positions 82–97 (QQLAAETEALAQRTQQ) are enriched in low complexity.

It belongs to the tektin family. Microtubule inner protein component of sperm flagellar doublet microtubules. Ubiquitinated, leading to its degradation. Deubiquitinated by USP16, promoting its stability. Expressed in trachea multiciliated cells.

It is found in the cytoplasm. The protein resides in the cytoskeleton. Its subcellular location is the cilium axoneme. It localises to the flagellum axoneme. In terms of biological role, microtubule inner protein (MIP) part of the dynein-decorated doublet microtubules (DMTs) in cilia and flagellar axoneme. Forms filamentous polymers in the walls of ciliary and flagellar microtubules. Contributes to normal sperm motility. In Bos taurus (Bovine), this protein is Tektin-4 (TEKT4).